Here is a 438-residue protein sequence, read N- to C-terminus: Phosphoribosylamine--glycine ligase (438 aa).

Residues 107–319 (RKLFEDYDIP…LAKISKQIVD (213 aa)) form the ATP-grasp domain. ATP is bound at residue 134–197 (IDNFDEPVVV…EELLLGEEYT (64 aa)). Residues Q277, E289, and N291 each coordinate Mg(2+). Q277, E289, and N291 together coordinate Mn(2+).

Belongs to the GARS family. The cofactor is Mg(2+). It depends on Mn(2+) as a cofactor.

It carries out the reaction 5-phospho-beta-D-ribosylamine + glycine + ATP = N(1)-(5-phospho-beta-D-ribosyl)glycinamide + ADP + phosphate + H(+). The protein operates within purine metabolism; IMP biosynthesis via de novo pathway; N(1)-(5-phospho-D-ribosyl)glycinamide from 5-phospho-alpha-D-ribose 1-diphosphate: step 2/2. The protein is Phosphoribosylamine--glycine ligase of Methanosphaera stadtmanae (strain ATCC 43021 / DSM 3091 / JCM 11832 / MCB-3).